The following is a 177-amino-acid chain: Cytidylate kinase (177 aa).

7 to 15 serves as a coordination point for ATP; that stretch reads GSPGSGTTT.

Belongs to the cytidylate kinase family. Type 2 subfamily.

The protein localises to the cytoplasm. The catalysed reaction is CMP + ATP = CDP + ADP. The enzyme catalyses dCMP + ATP = dCDP + ADP. In Methanocorpusculum labreanum (strain ATCC 43576 / DSM 4855 / Z), this protein is Cytidylate kinase.